The primary structure comprises 411 residues: Bifunctional protein GlmU (411 aa).

A pyrophosphorylase region spans residues 1-204; that stretch reads MDAIILCAGK…IGKLHGVELN (204 aa). UTP contacts are provided by residues 6–9, Gln-74, and Gly-79; that span reads LCAG. N-acetyl-alpha-D-glucosamine 1-phosphate is bound by residues Thr-80, Gly-130, Asn-142, and Asn-158. The linker stretch occupies residues 205-224; the sequence is GYWNDIGHPWDVLSANSHFL. The N-acetyltransferase stretch occupies residues 225 to 411; the sequence is NKIISKISGK…DELVITKKRN (187 aa). His-308 (proton acceptor) is an active-site residue. The acetyl-CoA site is built by Ala-384 and Lys-401.

It in the N-terminal section; belongs to the N-acetylglucosamine-1-phosphate uridyltransferase family. This sequence in the C-terminal section; belongs to the transferase hexapeptide repeat family.

The catalysed reaction is N-acetyl-alpha-D-glucosamine 1-phosphate + UTP + H(+) = UDP-N-acetyl-alpha-D-glucosamine + diphosphate. The enzyme catalyses alpha-D-glucosamine 1-phosphate + acetyl-CoA = N-acetyl-alpha-D-glucosamine 1-phosphate + CoA + H(+). Its pathway is nucleotide-sugar biosynthesis; UDP-N-acetyl-alpha-D-glucosamine biosynthesis; N-acetyl-alpha-D-glucosamine 1-phosphate from alpha-D-glucosamine 6-phosphate (route II): step 2/2. The protein operates within nucleotide-sugar biosynthesis; UDP-N-acetyl-alpha-D-glucosamine biosynthesis; UDP-N-acetyl-alpha-D-glucosamine from N-acetyl-alpha-D-glucosamine 1-phosphate: step 1/1. Its function is as follows. Catalyzes the last two sequential reactions in the de novo biosynthetic pathway for UDP-N-acetyl-glucosamine (UDP-GlcNAc). Responsible for the acetylation of GlcN-1-P to GlcNAc-1-P, and for the uridyl transfer from UTP to GlcNAc-1-P, to produce UDP-GlcNAc and pyrophosphate. The chain is Bifunctional protein GlmU from Methanococcus maripaludis (strain C5 / ATCC BAA-1333).